We begin with the raw amino-acid sequence, 412 residues long: Heme chaperone HemW (412 aa).

Residues 4 to 241 (GTYLMPTAAY…RHGQEVLTQA (238 aa)) enclose the Radical SAM core domain. Tyr-13 is a binding site for S-adenosyl-L-methionine. Positions 19, 23, and 26 each coordinate [2Fe-2S] cluster. Residues Gly-72, 73-74 (GT), Glu-105, Gln-132, Arg-144, and Asp-169 each bind S-adenosyl-L-methionine.

It belongs to the anaerobic coproporphyrinogen-III oxidase family. HemW subfamily. It depends on [4Fe-4S] cluster as a cofactor.

Its subcellular location is the cytoplasm. In terms of biological role, probably acts as a heme chaperone, transferring heme to an unknown acceptor. Binds one molecule of heme per monomer, possibly covalently. Binds 1 [2Fe-2S] cluster. Although this protein has sequence motifs typically found in proteins binding the [4Fe-4S]-AdoMet radical-SAM cluster and S-adenosylmethionine, spectroscopic evidence suggests that a [2Fe-2S] cluster is present; S-adenosylmethionine was not detected. Has no detectable coproporphyrinogen-III oxidase activity. This Synechocystis sp. (strain ATCC 27184 / PCC 6803 / Kazusa) protein is Heme chaperone HemW.